A 711-amino-acid polypeptide reads, in one-letter code: T-box transcription factor TBX2 (711 aa).

A DNA-binding region (T-box) is located at residues 109-287 (LEAKELWDQF…NNPFAKGFRD (179 aa)). The tract at residues 313-449 (PERDGAESDA…GEGKEPSLAP (137 aa)) is disordered. A compositionally biased stretch (pro residues) spans 326 to 340 (DPPPAREPPPSPSAA). Phosphoserine occurs at positions 336, 342, and 360. Basic and acidic residues-rich tracts occupy residues 363–372 (EPERTGEERS), 390–409 (TEPE…KEPT), and 421–444 (SLEK…EGKE). A repression domain 1 (RD1) region spans residues 518 to 602 (GSGSSGGAGP…ATSAAAAAAA (85 aa)). Residues serine 623, serine 652, serine 656, and serine 675 each carry the phosphoserine modification. Residues 640–687 (TGLAAEGSKGGNSREPSPLPELALRKVGGPSRGALSPSGSAKEAASEL) are disordered.

As to quaternary structure, binds DNA as a monomer. Interacts with CHD4, HDAC1 and HDAC2, perhaps as components of a NuRD-like complex. Interacts with CBX3, HMGB2 and PBX1. Interacts with PML. Phosphorylated. May be phosphorylated by p38 MAPK in response to UV irradiation stress. As to expression, in adults, highest levels in lung. Also found in heart, kidney, and ovary.

The protein resides in the nucleus. Transcription factor which acts as a transcriptional repressor. May also function as a transcriptional activator. Binds to the palindromic T site 5'-TTCACACCTAGGTGTGAA-3' DNA sequence, or a half-site, which are present in the regulatory region of several genes. Required for cardiac atrioventricular canal formation. May cooperate with NKX2.5 to negatively modulate expression of NPPA/ANF in the atrioventricular canal. May play a role as a positive regulator of TGFB2 expression, perhaps acting in concert with GATA4 in the developing outflow tract myocardium. Plays a role in limb pattern formation. Acts as a transcriptional repressor of ADAM10 gene expression, perhaps in concert with histone deacetylase HDAC1 as cofactor. Involved in branching morphogenesis in both developing lungs and adult mammary glands, via negative modulation of target genes; acting redundantly with TBX3. Required, together with TBX3, to maintain cell proliferation in the embryonic lung mesenchyme; perhaps acting downstream of SHH, BMP and TGFbeta signaling. Involved in modulating early inner ear development, acting independently of, and also redundantly with TBX3, in different subregions of the developing ear. Acts as a negative regulator of PML function in cellular senescence. Acts as a negative regulator of expression of CDKN1A/p21, IL33 and CCN4; repression of CDKN1A is enhanced in response to UV-induced stress, perhaps as a result of phosphorylation by p38 MAPK. Negatively modulates expression of CDKN2A/p19ARF and CDH1/E-cadherin. Plays a role in induction of the epithelial-mesenchymal transition (EMT). Plays a role in melanocyte proliferation, perhaps via regulation of cyclin CCND1. Involved in melanogenesis, acting via negative modulation of expression of DHICA oxidase/TYRP1 and P protein/OCA2. Involved in regulating retinal pigment epithelium (RPE) cell proliferation, perhaps via negatively modulating transcription of the transcription factor CEBPD. In Mus musculus (Mouse), this protein is T-box transcription factor TBX2 (Tbx2).